Consider the following 352-residue polypeptide: C-X-C chemokine receptor type 4 (352 aa).

Positions 1–21 (MEGISIYTSDNYTEEMGSGDY) are important for chemokine binding and signaling. Topologically, residues 1–38 (MEGISIYTSDNYTEEMGSGDYDSIKEPCFREENAHFNR) are extracellular. Sulfotyrosine is present on Y7. N-linked (GlcNAc...) asparagine glycosylation occurs at N11. Y12 bears the Sulfotyrosine mark. The O-linked (Xyl...) (chondroitin sulfate) serine glycan is linked to S18. Position 21 is a sulfotyrosine (Y21). Intrachain disulfides connect C28/C274 and C109/C186. A helical transmembrane segment spans residues 39–63 (IFLPTIYSIIFLTGIVGNGLVILVM). Topologically, residues 64–77 (GYQKKLRSMTDKYR) are cytoplasmic. A helical transmembrane segment spans residues 78 to 99 (LHLSVADLLFVITLPFWAVDAV). Residues 94 to 97 (WAVD) form a chemokine binding region. Topologically, residues 100-110 (ANWYFGNFLCK) are extracellular. Residues 111–130 (AVHVIYTVNLYSSVLILAFI) form a helical membrane-spanning segment. The segment at 113 to 117 (HVIYT) is chemokine binding. Topologically, residues 131 to 154 (SLDRYLAIVHATNSQRPRKLLAEK) are cytoplasmic. The Important for signaling signature appears at 133-135 (DRY). Residues 135–147 (YLAIVHATNSQRP) are involved in dimerization; when bound to chemokine. Residues 155–174 (VVYVGVWIPALLLTIPDFIF) traverse the membrane as a helical segment. The Extracellular segment spans residues 175 to 195 (ASVSEADDRYICDRFYPNDLW). The tract at residues 186–190 (CDRFY) is chemokine binding, important for signaling. The involved in dimerization stretch occupies residues 191-210 (PNDLWVVVFQFQHIMVGLIL). Residues 196–216 (VVVFQFQHIMVGLILPGIVIL) traverse the membrane as a helical segment. At 217–241 (SCYCIIISKLSHSKGHQKRKALKTT) the chain is on the cytoplasmic side. A helical membrane pass occupies residues 242–261 (VILILAFFACWLPYYIGISI). The Extracellular portion of the chain corresponds to 262-282 (DSFILLEIIKQGCEFENTVHK). The interval 266–268 (LLE) is involved in dimerization. Residues 283–302 (WISITEALAFFHCCLNPILY) traverse the membrane as a helical segment. At 303 to 352 (AFLGAKFKTSAQHALTSVSRGSSLKILSKGKRGGHSSVSTESESSSFHSS) the chain is on the cytoplasmic side. 2 positions are modified to phosphoserine: S319 and S321. S324 and S325 each carry phosphoserine; by PKC and GRK6. A disordered region spans residues 329 to 352 (LSKGKRGGHSSVSTESESSSFHSS). S330 carries the post-translational modification Phosphoserine; by GRK6. K331 is covalently cross-linked (Glycyl lysine isopeptide (Lys-Gly) (interchain with G-Cter in ubiquitin)). Positions 337–352 (HSSVSTESESSSFHSS) are enriched in low complexity. S339 carries the post-translational modification Phosphoserine; by GRK6. Phosphoserine is present on residues S348 and S351.

Belongs to the G-protein coupled receptor 1 family. In terms of assembly, monomer. Can form homodimers. Interacts with CD164. Interacts with ARRB2; the interaction is dependent on the C-terminal phosphorylation of CXCR4 and allows activation of MAPK1 and MAPK3. Interacts with ARR3; the interaction is dependent on the C-terminal phosphorylation of CXCR4 and modulates calcium mobilization. Interacts with RNF113A; the interaction, enhanced by CXCL12, promotes CXCR4 ubiquitination and subsequent degradation. Interacts (via the cytoplasmic C-terminal) with ITCH (via the WW domains I and II); the interaction, enhanced by CXCL12, promotes CXCR4 ubiquitination and leads to its degradation. Interacts with extracellular ubiquitin. Interacts with DBN1; this interaction is enhanced by antigenic stimulation. Following LPS binding, may form a complex with GDF5, HSP90AA1 and HSPA8. Phosphorylated on agonist stimulation. Rapidly phosphorylated on serine and threonine residues in the C-terminal. Phosphorylation at Ser-324 and Ser-325 leads to recruitment of ITCH, ubiquitination and protein degradation. In terms of processing, ubiquitinated after ligand binding, leading to its degradation. Ubiquitinated by ITCH at the cell membrane on agonist stimulation. The ubiquitin-dependent mechanism, endosomal sorting complex required for transport (ESCRT), then targets CXCR4 for lysosomal degradation. This process is dependent also on prior Ser-/Thr-phosphorylation in the C-terminal of CXCR4. Also binding of ARRB1 to STAM negatively regulates CXCR4 sorting to lysosomes though modulating ubiquitination of SFR5S. Post-translationally, sulfation is required for efficient binding of CXCL12/SDF-1alpha and promotes its dimerization. O- and N-glycosylated. N-glycosylation can mask coreceptor function. The O-glycosylation chondroitin sulfate attachment does not affect interaction with CXCL12/SDF-1alpha nor its coreceptor activity.

The protein localises to the cell membrane. The protein resides in the cell junction. It localises to the early endosome. Its subcellular location is the late endosome. It is found in the lysosome. Receptor for the C-X-C chemokine CXCL12/SDF-1 that transduces a signal by increasing intracellular calcium ion levels and enhancing MAPK1/MAPK3 activation. Involved in the AKT signaling cascade. Plays a role in regulation of cell migration, e.g. during wound healing. Acts as a receptor for extracellular ubiquitin; leading to enhanced intracellular calcium ions and reduced cellular cAMP levels. Binds bacterial lipopolysaccharide (LPS) et mediates LPS-induced inflammatory response, including TNF secretion by monocytes. Involved in hematopoiesis and in cardiac ventricular septum formation. Also plays an essential role in vascularization of the gastrointestinal tract, probably by regulating vascular branching and/or remodeling processes in endothelial cells. Involved in cerebellar development. In the CNS, could mediate hippocampal-neuron survival. The sequence is that of C-X-C chemokine receptor type 4 (CXCR4) from Papio anubis (Olive baboon).